A 445-amino-acid polypeptide reads, in one-letter code: Argininosuccinate synthase (445 aa).

ATP contacts are provided by residues 17–25 and Ala-43; that span reads AFSGGLDTS. Tyr-99 contacts L-citrulline. The ATP site is built by Gly-129 and Thr-131. Thr-131, Asn-135, and Asp-136 together coordinate L-aspartate. An L-citrulline-binding site is contributed by Asn-135. Residue Asp-136 participates in ATP binding. 2 residues coordinate L-citrulline: Arg-139 and Ser-192. Residue Asp-194 participates in ATP binding. L-citrulline contacts are provided by Thr-201, Glu-203, and Glu-280.

This sequence belongs to the argininosuccinate synthase family. Type 2 subfamily. In terms of assembly, homotetramer.

The protein localises to the cytoplasm. The enzyme catalyses L-citrulline + L-aspartate + ATP = 2-(N(omega)-L-arginino)succinate + AMP + diphosphate + H(+). It functions in the pathway amino-acid biosynthesis; L-arginine biosynthesis; L-arginine from L-ornithine and carbamoyl phosphate: step 2/3. This chain is Argininosuccinate synthase (argG), found in Bradyrhizobium diazoefficiens (strain JCM 10833 / BCRC 13528 / IAM 13628 / NBRC 14792 / USDA 110).